A 77-amino-acid polypeptide reads, in one-letter code: Acyl carrier protein (77 aa).

The Carrier domain maps to 1–76; it reads MDREQRIKEI…DVINYLNEKL (76 aa). An O-(pantetheine 4'-phosphoryl)serine modification is found at Ser-36.

It belongs to the acyl carrier protein (ACP) family. Post-translationally, 4'-phosphopantetheine is transferred from CoA to a specific serine of apo-ACP by AcpS. This modification is essential for activity because fatty acids are bound in thioester linkage to the sulfhydryl of the prosthetic group.

It localises to the cytoplasm. It functions in the pathway lipid metabolism; fatty acid biosynthesis. Functionally, carrier of the growing fatty acid chain in fatty acid biosynthesis. This chain is Acyl carrier protein, found in Hydrogenobaculum sp. (strain Y04AAS1).